The sequence spans 646 residues: Mitochondrial distribution and morphology protein 10 (646 aa).

Disordered regions lie at residues 206 to 230 and 315 to 347; these read KSTSSSMDRLDSSNPSLSSSTSLSN and ETSSSASYPQRNGSVLHTGSSSSSEDTEAGGGL. Positions 207–230 are enriched in low complexity; it reads STSSSMDRLDSSNPSLSSSTSLSN. Polar residues predominate over residues 315–333; sequence ETSSSASYPQRNGSVLHTG.

This sequence belongs to the MDM10 family. As to quaternary structure, component of the ER-mitochondria encounter structure (ERMES) or MDM complex, composed of MMM1, MDM10, MDM12 and MDM34. Associates with the mitochondrial outer membrane sorting assembly machinery SAM(core) complex.

It localises to the mitochondrion outer membrane. Its function is as follows. Component of the ERMES/MDM complex, which serves as a molecular tether to connect the endoplasmic reticulum and mitochondria. Components of this complex are involved in the control of mitochondrial shape and protein biogenesis and may function in phospholipid exchange. MDM10 is involved in the late assembly steps of the general translocase of the mitochondrial outer membrane (TOM complex). Functions in the TOM40-specific route of the assembly of outer membrane beta-barrel proteins, including the association of TOM40 with the receptor TOM22 and small TOM proteins. Can associate with the SAM(core) complex as well as the MDM12-MMM1 complex, both involved in late steps of the major beta-barrel assembly pathway, that is responsible for biogenesis of all outer membrane beta-barrel proteins. May act as a switch that shuttles between both complexes and channels precursor proteins into the TOM40-specific pathway. Plays a role in mitochondrial morphology and in the inheritance of mitochondria. The chain is Mitochondrial distribution and morphology protein 10 from Mycosarcoma maydis (Corn smut fungus).